Consider the following 181-residue polypeptide: MTEEHVVLLDEQDKPSGTLEKYAAHTLNTPLHLAFSCWLFNEDGQLLVTRRSLSKKAWPGVWTNSVCGHPQQDETTEEAIIRRCRFELGVEITDLTPVYPHFSYRATDPNGIVENEVCPVFAARATSVLQVNSEEVMDYQWSEFKSVWKSLLATPWAFSPWMVMQASDEQARERLLDYCQR.

Mn(2+)-binding residues include His25 and His32. The region spanning 30-164 is the Nudix hydrolase domain; sequence PLHLAFSCWL…PWAFSPWMVM (135 aa). Cys67 is a catalytic residue. His69 contributes to the Mn(2+) binding site. Glu87 is a binding site for Mg(2+). Residues Glu114 and Glu116 each coordinate Mn(2+). Glu116 is an active-site residue.

It belongs to the IPP isomerase type 1 family. As to quaternary structure, homodimer. The cofactor is Mg(2+). Mn(2+) serves as cofactor.

The protein localises to the cytoplasm. The catalysed reaction is isopentenyl diphosphate = dimethylallyl diphosphate. The protein operates within isoprenoid biosynthesis; dimethylallyl diphosphate biosynthesis; dimethylallyl diphosphate from isopentenyl diphosphate: step 1/1. Functionally, catalyzes the 1,3-allylic rearrangement of the homoallylic substrate isopentenyl (IPP) to its highly electrophilic allylic isomer, dimethylallyl diphosphate (DMAPP). This Salmonella paratyphi B (strain ATCC BAA-1250 / SPB7) protein is Isopentenyl-diphosphate Delta-isomerase.